The following is a 262-amino-acid chain: Global transcriptional regulator CodY (262 aa).

The tract at residues 1–159 (MAHLLEKTRK…ASTVVGIQLL (159 aa)) is GAF domain. The segment at residues 207-226 (ASVIADRIGITRSVIVNALR) is a DNA-binding region (H-T-H motif).

This sequence belongs to the CodY family.

It localises to the cytoplasm. DNA-binding global transcriptional regulator which is involved in the adaptive response to starvation and acts by directly or indirectly controlling the expression of numerous genes in response to nutrient availability. During rapid exponential growth, CodY is highly active and represses genes whose products allow adaptation to nutrient depletion. In Streptococcus pneumoniae (strain JJA), this protein is Global transcriptional regulator CodY.